The primary structure comprises 172 residues: Small ribosomal subunit protein uS5 (172 aa).

The S5 DRBM domain maps to 17–80 (LREKMISVNR…DEARRKMVKV (64 aa)).

Belongs to the universal ribosomal protein uS5 family. In terms of assembly, part of the 30S ribosomal subunit. Contacts proteins S4 and S8.

With S4 and S12 plays an important role in translational accuracy. Its function is as follows. Located at the back of the 30S subunit body where it stabilizes the conformation of the head with respect to the body. The sequence is that of Small ribosomal subunit protein uS5 from Cupriavidus pinatubonensis (strain JMP 134 / LMG 1197) (Cupriavidus necator (strain JMP 134)).